We begin with the raw amino-acid sequence, 197 residues long: MDFYIRHTWDSLPVDHKPVKIRFSPGEDGLLMQVTAPFFNDPPAPAGPPGEPFPGLWDYEVVESFFLNSETEQYLEVEVCPYGQHLILLLNGKHNAFMQQLPLSFRANIEDSTWHGEALLPWRYFPQGINKMNSYAIHGSGAGRTYESLYPVPREDLQEGQGPDFHRLEYFQDFTLQSIMGEDWVQPESDLWDLARK.

Belongs to the UPF0462 family.

The sequence is that of UPF0462 protein C4orf33 homolog from Danio rerio (Zebrafish).